The following is a 471-amino-acid chain: Ribulose bisphosphate carboxylase large chain (471 aa).

K5 carries the post-translational modification N6,N6,N6-trimethyllysine. Residues N114 and T164 each coordinate substrate. K166 functions as the Proton acceptor in the catalytic mechanism. Position 168 (K168) interacts with substrate. Residues K192, D194, and E195 each contribute to the Mg(2+) site. K192 is subject to N6-carboxylysine. Residue H285 is the Proton acceptor of the active site. 3 residues coordinate substrate: R286, H318, and S370.

The protein belongs to the RuBisCO large chain family. Type I subfamily. As to quaternary structure, heterohexadecamer of 8 large chains and 8 small chains; disulfide-linked. The disulfide link is formed within the large subunit homodimers. It depends on Mg(2+) as a cofactor. The disulfide bond which can form in the large chain dimeric partners within the hexadecamer appears to be associated with oxidative stress and protein turnover.

It localises to the plastid. Its subcellular location is the chloroplast. It catalyses the reaction 2 (2R)-3-phosphoglycerate + 2 H(+) = D-ribulose 1,5-bisphosphate + CO2 + H2O. The enzyme catalyses D-ribulose 1,5-bisphosphate + O2 = 2-phosphoglycolate + (2R)-3-phosphoglycerate + 2 H(+). Functionally, ruBisCO catalyzes two reactions: the carboxylation of D-ribulose 1,5-bisphosphate, the primary event in carbon dioxide fixation, as well as the oxidative fragmentation of the pentose substrate in the photorespiration process. Both reactions occur simultaneously and in competition at the same active site. The chain is Ribulose bisphosphate carboxylase large chain from Anthocleista grandiflora (Forest fever tree).